We begin with the raw amino-acid sequence, 364 residues long: Dihydroorotate dehydrogenase (quinone) (364 aa).

Residues 61–65 (AGFDK) and S85 contribute to the FMN site. K65 is a binding site for substrate. 110–114 (NRMGF) contacts substrate. Positions 139 and 170 each coordinate FMN. N170 provides a ligand contact to substrate. The Nucleophile role is filled by S173. N175 contributes to the substrate binding site. Residues K214 and S242 each coordinate FMN. 243–244 (NT) is a substrate binding site. Residues G266, G295, and 316 to 317 (YS) contribute to the FMN site.

The protein belongs to the dihydroorotate dehydrogenase family. Type 2 subfamily. Monomer. It depends on FMN as a cofactor.

The protein localises to the cell membrane. It catalyses the reaction (S)-dihydroorotate + a quinone = orotate + a quinol. Its pathway is pyrimidine metabolism; UMP biosynthesis via de novo pathway; orotate from (S)-dihydroorotate (quinone route): step 1/1. Its function is as follows. Catalyzes the conversion of dihydroorotate to orotate with quinone as electron acceptor. The protein is Dihydroorotate dehydrogenase (quinone) of Bradyrhizobium sp. (strain BTAi1 / ATCC BAA-1182).